Consider the following 270-residue polypeptide: Putative hydro-lyase H16_B1759 (270 aa).

The protein belongs to the D-glutamate cyclase family.

This chain is Putative hydro-lyase H16_B1759, found in Cupriavidus necator (strain ATCC 17699 / DSM 428 / KCTC 22496 / NCIMB 10442 / H16 / Stanier 337) (Ralstonia eutropha).